The chain runs to 55 residues: UPF0434 protein BPEN_388 (55 aa).

Belongs to the UPF0434 family.

The sequence is that of UPF0434 protein BPEN_388 from Blochmanniella pennsylvanica (strain BPEN).